Consider the following 278-residue polypeptide: DNA-directed RNA polymerase subunit alpha (278 aa).

Belongs to the RNA polymerase alpha chain family. As to quaternary structure, in plastids the minimal PEP RNA polymerase catalytic core is composed of four subunits: alpha, beta, beta', and beta''. When a (nuclear-encoded) sigma factor is associated with the core the holoenzyme is formed, which can initiate transcription.

It is found in the plastid. The protein localises to the chloroplast. It carries out the reaction RNA(n) + a ribonucleoside 5'-triphosphate = RNA(n+1) + diphosphate. Functionally, DNA-dependent RNA polymerase catalyzes the transcription of DNA into RNA using the four ribonucleoside triphosphates as substrates. This is DNA-directed RNA polymerase subunit alpha (rpoA) from Chlorella vulgaris (Green alga).